Consider the following 226-residue polypeptide: Putative ABC transporter ATP-binding protein DR_2469 (226 aa).

Residues 2–225 form the ABC transporter domain; the sequence is IELRHVSHHY…LRVYRERMTW (224 aa). 33–40 lines the ATP pocket; sequence GSNGSGKS.

This sequence belongs to the ABC transporter superfamily.

The protein localises to the cell membrane. Its function is as follows. Probably part of an ABC transporter complex. Responsible for energy coupling to the transport system. The chain is Putative ABC transporter ATP-binding protein DR_2469 from Deinococcus radiodurans (strain ATCC 13939 / DSM 20539 / JCM 16871 / CCUG 27074 / LMG 4051 / NBRC 15346 / NCIMB 9279 / VKM B-1422 / R1).